The following is a 280-amino-acid chain: Small ribosomal subunit protein uS3 (280 aa).

In terms of domain architecture, KH type-2 spans 38-106 (IRRLLSTGLE…QVQLNILEVR (69 aa)). The interval 215 to 280 (AAAAPAGAER…PAAEPQSTES (66 aa)) is disordered. A compositionally biased stretch (low complexity) spans 238–280 (SGASGTTATGTEAGRAAASADESTAAGQPAEAAPAAEPQSTES).

The protein belongs to the universal ribosomal protein uS3 family. Part of the 30S ribosomal subunit. Forms a tight complex with proteins S10 and S14.

In terms of biological role, binds the lower part of the 30S subunit head. Binds mRNA in the 70S ribosome, positioning it for translation. The sequence is that of Small ribosomal subunit protein uS3 from Mycobacterium avium (strain 104).